Reading from the N-terminus, the 442-residue chain is Protoheme IX farnesyltransferase (442 aa).

Residues 1 to 167 are unknown; the sequence is MGVYSLLVLG…AYVQLMKPRL (167 aa). 11 consecutive transmembrane segments (helical) span residues 49–69, 76–96, 106–126, 167–187, 194–214, 245–265, 267–287, 308–328, 365–385, 386–406, and 421–441; these read AAAL…RTGA, AVTL…YTAM, VHLT…AWTL, LMWL…SQLG, AATV…SGTF, LAFG…VNLL, AVLG…VLKP, WVAV…VIFL, HIVY…ELTG, LGPL…YFAI, and FHAS…DTMV. Positions 168–439 are prenyltransferase; the sequence is MWLLCLVAGA…CLLVAVVLDT (272 aa).

In the C-terminal section; belongs to the UbiA prenyltransferase family. Protoheme IX farnesyltransferase subfamily.

The protein localises to the cell membrane. It catalyses the reaction heme b + (2E,6E)-farnesyl diphosphate + H2O = Fe(II)-heme o + diphosphate. It participates in porphyrin-containing compound metabolism; heme O biosynthesis; heme O from protoheme: step 1/1. Converts heme B (protoheme IX) to heme O by substitution of the vinyl group on carbon 2 of heme B porphyrin ring with a hydroxyethyl farnesyl side group. This is Protoheme IX farnesyltransferase (ctaB) from Halobacterium salinarum (strain ATCC 700922 / JCM 11081 / NRC-1) (Halobacterium halobium).